The primary structure comprises 393 residues: S-adenosylmethionine synthase (393 aa).

Residue E9 participates in Mg(2+) binding. An ATP-binding site is contributed by H15. Position 43 (E43) interacts with K(+). L-methionine contacts are provided by E56 and Q99. Residues 167-169 (DGK), 235-238 (SGRF), D246, 252-253 (RK), A269, K273, and K277 each bind ATP. D246 is a binding site for L-methionine. An L-methionine-binding site is contributed by K277.

Belongs to the AdoMet synthase family. Homotetramer. Mn(2+) is required as a cofactor. It depends on Mg(2+) as a cofactor. Co(2+) serves as cofactor. The cofactor is K(+).

It is found in the cytoplasm. The catalysed reaction is L-methionine + ATP + H2O = S-adenosyl-L-methionine + phosphate + diphosphate. It functions in the pathway amino-acid biosynthesis; S-adenosyl-L-methionine biosynthesis; S-adenosyl-L-methionine from L-methionine: step 1/1. Catalyzes the formation of S-adenosylmethionine from methionine and ATP. The reaction comprises two steps that are both catalyzed by the same enzyme: formation of S-adenosylmethionine (AdoMet) and triphosphate, and subsequent hydrolysis of the triphosphate. In Litchi chinensis (Lychee), this protein is S-adenosylmethionine synthase (SAMS).